Consider the following 765-residue polypeptide: Dipeptidyl peptidase 4 (765 aa).

Topologically, residues 1-6 are cytoplasmic; it reads MKTPWK. A helical; Signal-anchor for type II membrane protein transmembrane segment spans residues 7–29; the sequence is VLLGLLGLAALITIITVPVVLLN. The Extracellular segment spans residues 30–765; that stretch reads KGNDAAADSR…HFIKQCFSLP (736 aa). Asparagine 84, asparagine 91, asparagine 149, asparagine 178, asparagine 228, asparagine 280, asparagine 320, asparagine 330, and asparagine 331 each carry an N-linked (GlcNAc...) asparagine glycan. Cystine bridges form between cysteine 384/cysteine 393, cysteine 443/cysteine 446, and cysteine 453/cysteine 471. Asparagine 519 is a glycosylation site (N-linked (GlcNAc...) asparagine). Serine 629 functions as the Charge relay system in the catalytic mechanism. A disulfide bridge links cysteine 648 with cysteine 761. Asparagine 684 carries an N-linked (GlcNAc...) asparagine glycan. Active-site charge relay system residues include aspartate 707 and histidine 739.

This sequence belongs to the peptidase S9B family. DPPIV subfamily. Monomer. Homodimer. Heterodimer with Seprase (FAP). Requires homodimerization for optimal dipeptidyl peptidase activity and T-cell costimulation. Found in a membrane raft complex, at least composed of BCL10, CARD11, DPP4 and IKBKB. Associates with collagen. Interacts with PTPRC; the interaction is enhanced in an interleukin-12-dependent manner in activated lymphocytes. Interacts (extracellular domain) with ADA; does not inhibit its dipeptidyl peptidase activity. Interacts with CAV1 (via the N-terminus); the interaction is direct. Interacts (via cytoplasmic tail) with CARD11 (via PDZ domain); its homodimerization is necessary for interaction with CARD11. Interacts with IGF2R; the interaction is direct. Interacts with GPC3. In terms of processing, the soluble form (Dipeptidyl peptidase 4 soluble form also named SDPP) derives from the membrane form (Dipeptidyl peptidase 4 membrane form also named MDPP) by proteolytic processing. Post-translationally, N- and O-Glycosylated. Phosphorylated. Mannose 6-phosphate residues in the carbohydrate moiety are necessary for interaction with IGF2R in activated T-cells. Mannose 6-phosphorylation is induced during T-cell activation.

It is found in the secreted. The protein localises to the cell membrane. Its subcellular location is the apical cell membrane. It localises to the cell projection. The protein resides in the invadopodium membrane. It is found in the lamellipodium membrane. The protein localises to the cell junction. Its subcellular location is the membrane raft. The catalysed reaction is Release of an N-terminal dipeptide, Xaa-Yaa-|-Zaa-, from a polypeptide, preferentially when Yaa is Pro, provided Zaa is neither Pro nor hydroxyproline.. Inhibited by GPC3 and diprotin A. Functionally, cell surface glycoprotein receptor involved in the costimulatory signal essential for T-cell receptor (TCR)-mediated T-cell activation. Acts as a positive regulator of T-cell coactivation, by binding at least ADA, CAV1, IGF2R, and PTPRC. Its binding to CAV1 and CARD11 induces T-cell proliferation and NF-kappa-B activation in a T-cell receptor/CD3-dependent manner. Its interaction with ADA also regulates lymphocyte-epithelial cell adhesion. In association with FAP is involved in the pericellular proteolysis of the extracellular matrix (ECM), the migration and invasion of endothelial cells into the ECM. May be involved in the promotion of lymphatic endothelial cells adhesion, migration and tube formation. When overexpressed, enhanced cell proliferation, a process inhibited by GPC3. Also acts as a serine exopeptidase with a dipeptidyl peptidase activity that regulates various physiological processes by cleaving peptides in the circulation, including many chemokines, mitogenic growth factors, neuropeptides and peptide hormones. Removes N-terminal dipeptides sequentially from polypeptides having unsubstituted N-termini provided that the penultimate residue is proline. The sequence is that of Dipeptidyl peptidase 4 (DPP4) from Felis catus (Cat).